Here is a 608-residue protein sequence, read N- to C-terminus: N(6)-adenosine-methyltransferase MT-A70-like protein (608 aa).

Positions 250 to 265 (KKKQERRDEKELRPDV) are enriched in basic and acidic residues. Residues 250–272 (KKKQERRDEKELRPDVDAGENVT) are disordered. S-adenosyl-L-methionine is bound by residues 395 to 396 (DL) and D413. Positions 414–428 (PPWDIHMELPYGTMS) are gate loop 1. The segment at 480–497 (QLQRIIRTGRTGHWLNHG) is interphase loop. Residues 483–496 (RIIRTGRTGHWLNH) form a positively charged region required for RNA-binding region. Residues 525–533 (VRATSHKPD) form a gate loop 2 region. S-adenosyl-L-methionine-binding positions include K531, 554–557 (RPHN), and 567–568 (NQ).

Belongs to the MT-A70-like family. In terms of assembly, component of the WMM complex, a N6-methyltransferase complex composed of a catalytic subcomplex, named MAC, and of an associated subcomplex, named MACOM. The MAC subcomplex is composed of Ime4/Mettl3 and Mettl14. The MACOM subcomplex is composed of fl(2)d, Flacc/Xio, Hakai, vir, and, in some cases of nito. In terms of tissue distribution, expressed in testes. In the ovaries, detected in germaria, prefollicle, follicle and polar cells (at protein levels). Detected in the ooplasm and in the cells of the 16-cell cyst of early stages (at protein levels).

The protein resides in the nucleus. The enzyme catalyses an adenosine in mRNA + S-adenosyl-L-methionine = an N(6)-methyladenosine in mRNA + S-adenosyl-L-homocysteine + H(+). In terms of biological role, catalytic component of the WMM complex, a complex that mediates N6-methyladenosine (m6A) methylation of mRNAs, a modification that plays a role in the efficiency of mRNA splicing and is required for sex determination. In the heterodimer formed with Mettl14, constitutes the catalytic core. Required for sex determination and dosage compensation via Sxl alternative splicing: m6A methylation acts as a key regulator of Sxl pre-mRNA and promotes female-specific alternative splicing of Sxl, which determines female physiognomy. M6A methylation is also required for neuronal functions. During oogenesis, required for egg chamber development probably as part of the N/Notch signaling. The chain is N(6)-adenosine-methyltransferase MT-A70-like protein from Drosophila melanogaster (Fruit fly).